The sequence spans 92 residues: Putative membrane protein insertion efficiency factor (92 aa).

The protein belongs to the UPF0161 family.

The protein resides in the cell inner membrane. Its function is as follows. Could be involved in insertion of integral membrane proteins into the membrane. This is Putative membrane protein insertion efficiency factor from Synechococcus sp. (strain CC9605).